The sequence spans 502 residues: L-amino-acid oxidase BmooLAAO-I (502 aa).

An N-terminal signal peptide occupies residues 1-18; it reads MNVFFTFSLLFLAALGSC. Cysteines 28 and 191 form a disulfide. FAD is bound by residues 61–62, 81–82, R89, and 105–108; these read MS, EA, and GPMR. R108 provides a ligand contact to substrate. An N-linked (GlcNAc...) asparagine glycan is attached at N190. Residue H241 coordinates substrate. V279 is an FAD binding site. The cysteines at positions 349 and 430 are disulfide-linked. Y390 contributes to the substrate binding site. FAD-binding positions include E475 and 482–487; that span reads GWIDST. Substrate is bound at residue 482 to 483; that stretch reads GW.

It belongs to the flavin monoamine oxidase family. FIG1 subfamily. In terms of assembly, homodimer; non-covalently linked. It depends on FAD as a cofactor. Post-translationally, N-glycosylated. The enzymatic activity is not affected by deglycosylation. In terms of tissue distribution, expressed by the venom gland.

It localises to the secreted. It catalyses the reaction an L-alpha-amino acid + O2 + H2O = a 2-oxocarboxylate + H2O2 + NH4(+). The catalysed reaction is L-leucine + O2 + H2O = 4-methyl-2-oxopentanoate + H2O2 + NH4(+). It carries out the reaction L-phenylalanine + O2 + H2O = 3-phenylpyruvate + H2O2 + NH4(+). The enzyme catalyses L-tryptophan + O2 + H2O = indole-3-pyruvate + H2O2 + NH4(+). It catalyses the reaction L-methionine + O2 + H2O = 4-methylsulfanyl-2-oxobutanoate + H2O2 + NH4(+). The catalysed reaction is L-isoleucine + O2 + H2O = (S)-3-methyl-2-oxopentanoate + H2O2 + NH4(+). It carries out the reaction L-histidine + O2 + H2O = 3-(imidazol-5-yl)pyruvate + H2O2 + NH4(+). The enzyme catalyses L-tyrosine + O2 + H2O = 3-(4-hydroxyphenyl)pyruvate + H2O2 + NH4(+). It catalyses the reaction L-alanine + O2 + H2O = pyruvate + H2O2 + NH4(+). The catalysed reaction is L-valine + O2 + H2O = 3-methyl-2-oxobutanoate + H2O2 + NH4(+). Its enzymatic activities is reduced when it is exposed to Ca(2+), Zn(2+), Al(3+), Cu(2+) or Ni(2+) salts. Functionally, catalyzes an oxidative deamination of predominantly hydrophobic and aromatic L-amino acids, thus producing hydrogen peroxide that may contribute to the toxicity of the venom. Shows very high activity on L-Met, and L-Leu, high activity on L-Ile, L-Phe and L-Tyr and moderate activity on L-His, L-Val and L-Ala. Exhibits diverse biological activities, such as edema, apoptosis of tumor cell lines, antibacterial activities against both Gram-positive and Gram-negative bacteria, as well as induction of platelet aggregation. Effects of snake L-amino oxidases on platelets are controversial, since they either induce aggregation or inhibit agonist-induced aggregation. These different effects are probably due to different experimental conditions. Unlike other snake venom L-amino acid oxidases, does not induce hemorrhage. It may also induce hemolysis. Has parasiticidal activities against and leishmania, as a result of enzyme-catalyzed hydrogen peroxide production. The polypeptide is L-amino-acid oxidase BmooLAAO-I (Bothrops moojeni (Lance-headed viper)).